The following is a 482-amino-acid chain: UDP-N-acetylmuramate--L-alanine ligase (482 aa).

123-129 (GTHGKTT) serves as a coordination point for ATP.

The protein belongs to the MurCDEF family.

Its subcellular location is the cytoplasm. The enzyme catalyses UDP-N-acetyl-alpha-D-muramate + L-alanine + ATP = UDP-N-acetyl-alpha-D-muramoyl-L-alanine + ADP + phosphate + H(+). It participates in cell wall biogenesis; peptidoglycan biosynthesis. Its function is as follows. Cell wall formation. The protein is UDP-N-acetylmuramate--L-alanine ligase of Pseudomonas putida (strain W619).